The chain runs to 161 residues: Endoribonuclease YbeY (161 aa).

Zn(2+)-binding residues include His121, His125, and His131.

It belongs to the endoribonuclease YbeY family. Zn(2+) serves as cofactor.

Its subcellular location is the cytoplasm. Its function is as follows. Single strand-specific metallo-endoribonuclease involved in late-stage 70S ribosome quality control and in maturation of the 3' terminus of the 16S rRNA. The chain is Endoribonuclease YbeY from Bordetella avium (strain 197N).